Here is a 204-residue protein sequence, read N- to C-terminus: Putative t-SNARE coiled-coil homology domain-containing protein L657 (204 aa).

2 t-SNARE coiled-coil homology domains span residues 9 to 71 (SDYY…MDHV) and 140 to 202 (DNSR…IKHT). Residues 159-181 (VLEKQANDISNILDEQNNTLEII) adopt a coiled-coil conformation.

This Acanthamoeba polyphaga (Amoeba) protein is Putative t-SNARE coiled-coil homology domain-containing protein L657.